Here is a 266-residue protein sequence, read N- to C-terminus: Putative carbamate hydrolase RutD (266 aa).

Belongs to the AB hydrolase superfamily. Hydrolase RutD family.

The catalysed reaction is carbamate + 2 H(+) = NH4(+) + CO2. Involved in pyrimidine catabolism. May facilitate the hydrolysis of carbamate, a reaction that can also occur spontaneously. This Escherichia coli O103:H2 (strain 12009 / EHEC) protein is Putative carbamate hydrolase RutD.